Consider the following 372-residue polypeptide: Alanine racemase (372 aa).

The active-site Proton acceptor; specific for D-alanine is Lys-41. Lys-41 bears the N6-(pyridoxal phosphate)lysine mark. A substrate-binding site is contributed by Arg-139. Residue Tyr-268 is the Proton acceptor; specific for L-alanine of the active site. Met-316 provides a ligand contact to substrate.

The protein belongs to the alanine racemase family. It depends on pyridoxal 5'-phosphate as a cofactor.

It carries out the reaction L-alanine = D-alanine. It participates in amino-acid biosynthesis; D-alanine biosynthesis; D-alanine from L-alanine: step 1/1. Functionally, catalyzes the interconversion of L-alanine and D-alanine. May also act on other amino acids. In Borreliella burgdorferi (strain ATCC 35210 / DSM 4680 / CIP 102532 / B31) (Borrelia burgdorferi), this protein is Alanine racemase (alr).